We begin with the raw amino-acid sequence, 429 residues long: tRNA threonylcarbamoyladenosine dehydratase 1 (429 aa).

Helical transmembrane passes span 3–23 (NNTW…TQLA) and 74–94 (EQYI…TMLI). Phosphoserine is present on Ser-259. The helical transmembrane segment at 279-299 (LPELGTMPGIFGLSIATWILT) threads the bilayer.

The protein belongs to the HesA/MoeB/ThiF family.

Its subcellular location is the mitochondrion outer membrane. Functionally, catalyzes the ATP-dependent dehydration of threonylcarbamoyladenosine at position 37 (t(6)A37) to form cyclic t(6)A37 (ct(6)A37) in tRNAs that read codons beginning with adenine. The chain is tRNA threonylcarbamoyladenosine dehydratase 1 (TCD1) from Saccharomyces cerevisiae (strain ATCC 204508 / S288c) (Baker's yeast).